The sequence spans 218 residues: Adenylate kinase (218 aa).

10–15 contributes to the ATP binding site; that stretch reads GAGKGT. The interval 30–59 is NMP; it reads STGDIFREAIAKGTELGRKVQDIVNSGNLV. AMP is bound by residues threonine 31, arginine 36, 57-59, 85-88, and glutamine 92; these read NLV and GYPR. The LID stretch occupies residues 126-163; it reads TRRVCSKCGKVYNVITLPSKVEGICDDCGGTLIQRDDD. Arginine 127 is an ATP binding site. The Zn(2+) site is built by cysteine 130 and cysteine 133. 136 to 137 is a binding site for ATP; that stretch reads VY. Zn(2+) is bound by residues cysteine 150 and cysteine 153. 2 residues coordinate AMP: arginine 160 and arginine 171. Lysine 199 is an ATP binding site.

Belongs to the adenylate kinase family. In terms of assembly, monomer.

It is found in the cytoplasm. It carries out the reaction AMP + ATP = 2 ADP. Its pathway is purine metabolism; AMP biosynthesis via salvage pathway; AMP from ADP: step 1/1. Its function is as follows. Catalyzes the reversible transfer of the terminal phosphate group between ATP and AMP. Plays an important role in cellular energy homeostasis and in adenine nucleotide metabolism. The chain is Adenylate kinase from Fervidobacterium nodosum (strain ATCC 35602 / DSM 5306 / Rt17-B1).